A 446-amino-acid chain; its full sequence is Cytochrome P450 monooxygenase ptmP (446 aa).

The chain crosses the membrane as a helical span at residues 19-39 (VTVIWILMALVLLAYLILPNP). Cys-385 provides a ligand contact to heme. An N-linked (GlcNAc...) asparagine glycan is attached at Asn-430.

This sequence belongs to the cytochrome P450 family. It depends on heme as a cofactor.

Its subcellular location is the membrane. It functions in the pathway secondary metabolite biosynthesis. Functionally, cytochrome P450 monooxygenase; part of the gene cluster that mediates the biosynthesis of the indole diterpenes penitrems. The geranylgeranyl diphosphate (GGPP) synthase ptmG catalyzes the first step in penitrem biosynthesis via conversion of farnesyl pyrophosphate and isopentyl pyrophosphate into geranylgeranyl pyrophosphate (GGPP). Condensation of indole-3-glycerol phosphate with GGPP by the prenyl transferase ptmC then forms 3-geranylgeranylindole (3-GGI). Epoxidation by the FAD-dependent monooxygenase ptmM leads to a epoxidized-GGI that is substrate of the terpene cyclase ptmB for cyclization to yield paspaline. Paspaline is subsequently converted to 13-desoxypaxilline by the cytochrome P450 monooxygenase ptmP, the latter being then converted to paxilline by the cytochrome P450 monooxygenase ptmQ. Paxilline is converted to beta-paxitriol via C-10 ketoreduction by the short-chain dehydrogenase ptmH which can be monoprenylated at the C-20 by the indole diterpene prenyltransferase ptmD. A two-step elimination (acetylation and elimination) process performed by the O-acetyltransferase ptmV and ptmI leads to the production of the prenylated form of penijanthine. The FAD-linked oxidoreductase ptmO then converts the prenylated form of penijanthine into PC-M5 which is in turn transformed into PC-M4 by the aromatic dimethylallyltransferase ptmE. Five sequential oxidative transformations performed by the cytochrome P450 monooxygenases ptmK, ptmU, ptmL, ptmN and ptmJ yield the various penitrem compounds. PtmK, ptmU and ptmM are involved in the formation of the key bicyclic ring of penitrem C via the formation of the intermediates secopenitrem D and penitrem D. PtmL catalyzes the epoxidation of penitrem D and C to yield penitrem B and F, respectively. PtmJ catalyzes the last benzylic hydroxylation to convert penitrem B to prenitrem E and penitrem F to penitrem A. The polypeptide is Cytochrome P450 monooxygenase ptmP (Penicillium ochrochloron).